Consider the following 382-residue polypeptide: UDP-N-acetylglucosamine--N-acetylmuramyl-(pentapeptide) pyrophosphoryl-undecaprenol N-acetylglucosamine transferase (382 aa).

UDP-N-acetyl-alpha-D-glucosamine is bound by residues 17–19 (TAG), N137, R179, S213, and Q308.

This sequence belongs to the glycosyltransferase 28 family. MurG subfamily.

Its subcellular location is the cell membrane. It carries out the reaction di-trans,octa-cis-undecaprenyl diphospho-N-acetyl-alpha-D-muramoyl-L-alanyl-D-glutamyl-meso-2,6-diaminopimeloyl-D-alanyl-D-alanine + UDP-N-acetyl-alpha-D-glucosamine = di-trans,octa-cis-undecaprenyl diphospho-[N-acetyl-alpha-D-glucosaminyl-(1-&gt;4)]-N-acetyl-alpha-D-muramoyl-L-alanyl-D-glutamyl-meso-2,6-diaminopimeloyl-D-alanyl-D-alanine + UDP + H(+). It functions in the pathway cell wall biogenesis; peptidoglycan biosynthesis. Functionally, cell wall formation. Catalyzes the transfer of a GlcNAc subunit on undecaprenyl-pyrophosphoryl-MurNAc-pentapeptide (lipid intermediate I) to form undecaprenyl-pyrophosphoryl-MurNAc-(pentapeptide)GlcNAc (lipid intermediate II). This is UDP-N-acetylglucosamine--N-acetylmuramyl-(pentapeptide) pyrophosphoryl-undecaprenol N-acetylglucosamine transferase from Rhodococcus opacus (strain B4).